We begin with the raw amino-acid sequence, 213 residues long: Adenylate kinase (213 aa).

10 to 15 (GSGKGT) serves as a coordination point for ATP. The NMP stretch occupies residues 30-59 (STGDMLRTTVNKESVLGKNIQAIIKLGNLV). AMP is bound by residues threonine 31, arginine 36, 57 to 59 (NLV), 85 to 88 (GFPR), and glutamine 92. The interval 122–159 (GRMVHEPSGRIYHVTFNPPKQKGKDDITGENLIIRQDD) is LID. ATP contacts are provided by residues arginine 123 and 132–133 (IY). AMP contacts are provided by arginine 156 and arginine 167. Cysteine 199 is a binding site for ATP.

The protein belongs to the adenylate kinase family. Monomer.

The protein resides in the cytoplasm. It catalyses the reaction AMP + ATP = 2 ADP. The protein operates within purine metabolism; AMP biosynthesis via salvage pathway; AMP from ADP: step 1/1. Its function is as follows. Catalyzes the reversible transfer of the terminal phosphate group between ATP and AMP. Plays an important role in cellular energy homeostasis and in adenine nucleotide metabolism. The polypeptide is Adenylate kinase (Baumannia cicadellinicola subsp. Homalodisca coagulata).